The sequence spans 87 residues: Citrate lyase acyl carrier protein (87 aa).

Serine 14 carries the O-(phosphoribosyl dephospho-coenzyme A)serine modification.

This sequence belongs to the CitD family. In terms of assembly, oligomer with a subunit composition of (alpha,beta,gamma)6.

Its subcellular location is the cytoplasm. In terms of biological role, covalent carrier of the coenzyme of citrate lyase. This chain is Citrate lyase acyl carrier protein, found in Treponema denticola (strain ATCC 35405 / DSM 14222 / CIP 103919 / JCM 8153 / KCTC 15104).